A 450-amino-acid polypeptide reads, in one-letter code: tRNA modification GTPase MnmE (450 aa).

(6S)-5-formyl-5,6,7,8-tetrahydrofolate contacts are provided by Arg24, Glu82, and Lys121. The TrmE-type G domain maps to 218-375 (GMHVVLVGQP…LRQVLLEAVG (158 aa)). Asn228 provides a ligand contact to K(+). GTP-binding positions include 228-233 (NVGKSS), 247-253 (TDIAGTT), 272-275 (DTAG), and 356-358 (SAR). Ser232 contacts Mg(2+). K(+) is bound by residues Thr247, Ile249, and Thr252. Position 253 (Thr253) interacts with Mg(2+). Lys450 serves as a coordination point for (6S)-5-formyl-5,6,7,8-tetrahydrofolate.

The protein belongs to the TRAFAC class TrmE-Era-EngA-EngB-Septin-like GTPase superfamily. TrmE GTPase family. As to quaternary structure, homodimer. Heterotetramer of two MnmE and two MnmG subunits. Requires K(+) as cofactor.

The protein localises to the cytoplasm. In terms of biological role, exhibits a very high intrinsic GTPase hydrolysis rate. Involved in the addition of a carboxymethylaminomethyl (cmnm) group at the wobble position (U34) of certain tRNAs, forming tRNA-cmnm(5)s(2)U34. The sequence is that of tRNA modification GTPase MnmE from Laribacter hongkongensis (strain HLHK9).